The sequence spans 246 residues: MLVVFVATWSDLGLCKKRPKPGGWNTGGSRYPGQGSPGGNRYPPQGGGGWGQPHGGGWGQPHGGGWGQPHGGGWGQPHGGGWGQGGGTHNQWHKPSKPKTSMKHMAGAAAAGAVVGGLGGYMLGSAMSRPLIHFGNDYEDRYYRENMYRYPNQVYYRPVDQYSNQNNFVHDCVNITIKQHTVTTTTKGENFTETDVKMMERVVEQMCITQYEKESQAYYQRGSSMVLFSSPPVILLISFLIFLIVG.

A signal peptide spans 1–15 (MLVVFVATWSDLGLC). The segment at 16-223 (KKRPKPGGWN…ESQAYYQRGS (208 aa)) is interaction with GRB2, ERI3 and SYN1. Residues 18-100 (RPKPGGWNTG…QWHKPSKPKT (83 aa)) are disordered. 5 tandem repeats follow at residues 44 to 52 (PQGGGGWGQ), 53 to 60 (PHGGGWGQ), 61 to 68 (PHGGGWGQ), 69 to 76 (PHGGGWGQ), and 77 to 84 (PHGGGWGQ). Residues 44 to 84 (PQGGGGWGQPHGGGWGQPHGGGWGQPHGGGWGQPHGGGWGQ) form a 5 X 8 AA tandem repeats of P-H-G-G-G-W-G-Q region. Residues 45-88 (QGGGGWGQPHGGGWGQPHGGGWGQPHGGGWGQPHGGGWGQGGGT) show a composition bias toward gly residues. Cu(2+) contacts are provided by His-54, Gly-55, Gly-56, His-62, Gly-63, Gly-64, His-70, Gly-71, Gly-72, His-78, Gly-79, and Gly-80. The span at 91–100 (QWHKPSKPKT) shows a compositional bias: basic residues. Cys-172 and Cys-207 are disulfide-bonded. Asn-174 and Asn-190 each carry an N-linked (GlcNAc...) asparagine glycan. Residue Ser-223 is the site of GPI-anchor amidated serine attachment. Positions 224-246 (SMVLFSSPPVILLISFLIFLIVG) are cleaved as a propeptide — removed in mature form.

Belongs to the prion family. In terms of assembly, monomer and homodimer. Has a tendency to aggregate into amyloid fibrils containing a cross-beta spine, formed by a steric zipper of superposed beta-strands. Soluble oligomers may represent an intermediate stage on the path to fibril formation. Copper binding may promote oligomerization. Interacts with GRB2, APP, ERI3/PRNPIP and SYN1. Mislocalized cytosolically exposed PrP interacts with MGRN1; this interaction alters MGRN1 subcellular location and causes lysosomal enlargement. Interacts with KIAA1191.

The protein localises to the cell membrane. It localises to the golgi apparatus. In terms of biological role, its primary physiological function is unclear. Has cytoprotective activity against internal or environmental stresses. May play a role in neuronal development and synaptic plasticity. May be required for neuronal myelin sheath maintenance. May play a role in iron uptake and iron homeostasis. Soluble oligomers are toxic to cultured neuroblastoma cells and induce apoptosis (in vitro). Association with GPC1 (via its heparan sulfate chains) targets PRNP to lipid rafts. Also provides Cu(2+) or Zn(2+) for the ascorbate-mediated GPC1 deaminase degradation of its heparan sulfate side chains. The protein is Major prion protein (PRNP) of Erythrocebus patas (Red guenon).